The primary structure comprises 455 residues: Nuclear receptor subfamily 6 group A member 1-B (455 aa).

Residues 38 to 113 constitute a DNA-binding region (nuclear receptor); the sequence is ERWCLICGDR…MGMNRKAIRE (76 aa). NR C4-type zinc fingers lie at residues 41-61 and 77-96; these read CLIC…CEGC and CNRD…CQYC. Residues 145–173 are disordered; the sequence is EGSDLSDSWSHGYSNHSSPGNSLSEGGQS. The segment covering 149 to 165 has biased composition (polar residues); it reads LSDSWSHGYSNHSSPGN. The NR LBD domain occupies 215–446; it reads QTHTLTGQIL…YSCTTNQNPW (232 aa).

This sequence belongs to the nuclear hormone receptor family. NR6 subfamily. In terms of assembly, homodimer.

The protein resides in the nucleus. In terms of biological role, probable orphan nuclear receptor. Binds to a response element containing repeats of the motif 5'-AGGTCA-3'. In Danio rerio (Zebrafish), this protein is Nuclear receptor subfamily 6 group A member 1-B.